We begin with the raw amino-acid sequence, 377 residues long: Succinyl-diaminopimelate desuccinylase (377 aa).

Histidine 68 contacts Zn(2+). Aspartate 70 is a catalytic residue. Aspartate 101 provides a ligand contact to Zn(2+). Catalysis depends on glutamate 135, which acts as the Proton acceptor. Zn(2+) is bound by residues glutamate 136, glutamate 164, and histidine 350.

Belongs to the peptidase M20A family. DapE subfamily. As to quaternary structure, homodimer. The cofactor is Zn(2+). Co(2+) serves as cofactor.

The enzyme catalyses N-succinyl-(2S,6S)-2,6-diaminopimelate + H2O = (2S,6S)-2,6-diaminopimelate + succinate. The protein operates within amino-acid biosynthesis; L-lysine biosynthesis via DAP pathway; LL-2,6-diaminopimelate from (S)-tetrahydrodipicolinate (succinylase route): step 3/3. Functionally, catalyzes the hydrolysis of N-succinyl-L,L-diaminopimelic acid (SDAP), forming succinate and LL-2,6-diaminopimelate (DAP), an intermediate involved in the bacterial biosynthesis of lysine and meso-diaminopimelic acid, an essential component of bacterial cell walls. This is Succinyl-diaminopimelate desuccinylase from Aliivibrio fischeri (strain ATCC 700601 / ES114) (Vibrio fischeri).